The primary structure comprises 679 residues: Glycine--tRNA ligase beta subunit (679 aa).

It belongs to the class-II aminoacyl-tRNA synthetase family. Tetramer of two alpha and two beta subunits.

The protein localises to the cytoplasm. The catalysed reaction is tRNA(Gly) + glycine + ATP = glycyl-tRNA(Gly) + AMP + diphosphate. The chain is Glycine--tRNA ligase beta subunit from Streptococcus pyogenes serotype M49 (strain NZ131).